Consider the following 1172-residue polypeptide: DNA-directed RNA polymerase subunit beta (1172 aa).

This sequence belongs to the RNA polymerase beta chain family. As to quaternary structure, the RNAP catalytic core consists of 2 alpha, 1 beta, 1 beta' and 1 omega subunit. When a sigma factor is associated with the core the holoenzyme is formed, which can initiate transcription.

It catalyses the reaction RNA(n) + a ribonucleoside 5'-triphosphate = RNA(n+1) + diphosphate. In terms of biological role, DNA-dependent RNA polymerase catalyzes the transcription of DNA into RNA using the four ribonucleoside triphosphates as substrates. The chain is DNA-directed RNA polymerase subunit beta from Mycobacterium sp. (strain JLS).